The sequence spans 378 residues: Ribosomal RNA large subunit methyltransferase G (378 aa).

This sequence belongs to the methyltransferase superfamily. RlmG family.

Its subcellular location is the cytoplasm. The catalysed reaction is guanosine(1835) in 23S rRNA + S-adenosyl-L-methionine = N(2)-methylguanosine(1835) in 23S rRNA + S-adenosyl-L-homocysteine + H(+). Specifically methylates the guanine in position 1835 (m2G1835) of 23S rRNA. The chain is Ribosomal RNA large subunit methyltransferase G from Shewanella baltica (strain OS195).